The sequence spans 591 residues: Aspartate--tRNA(Asp/Asn) ligase (591 aa).

Glu176 is an L-aspartate binding site. Residues 200–203 (QLFK) form an aspartate region. Arg222 contributes to the L-aspartate binding site. ATP contacts are provided by residues 222–224 (RDE) and Gln231. His450 contacts L-aspartate. Glu484 contacts ATP. Arg491 provides a ligand contact to L-aspartate. Residue 536 to 539 (GLDR) participates in ATP binding.

It belongs to the class-II aminoacyl-tRNA synthetase family. Type 1 subfamily. Homodimer.

The protein resides in the cytoplasm. The enzyme catalyses tRNA(Asx) + L-aspartate + ATP = L-aspartyl-tRNA(Asx) + AMP + diphosphate. Aspartyl-tRNA synthetase with relaxed tRNA specificity since it is able to aspartylate not only its cognate tRNA(Asp) but also tRNA(Asn). Reaction proceeds in two steps: L-aspartate is first activated by ATP to form Asp-AMP and then transferred to the acceptor end of tRNA(Asp/Asn). The chain is Aspartate--tRNA(Asp/Asn) ligase from Bacillus cereus (strain ATCC 10987 / NRS 248).